A 299-amino-acid chain; its full sequence is F-actin-capping protein subunit alpha-3 (299 aa).

Ser-290 is subject to Phosphoserine.

The protein belongs to the F-actin-capping protein alpha subunit family. Component of the F-actin capping complex, composed of a heterodimer of an alpha and a beta subunit. Component of the WASH complex, composed of F-actin-capping protein subunit alpha (CAPZA1, CAPZA2 or CAPZA3), F-actin-capping protein subunit beta (CAPZB), WASHC1, WASHC2, WASHC3, WASHC4 and WASHC5.

In terms of biological role, F-actin-capping proteins bind in a Ca(2+)-independent manner to the fast growing ends of actin filaments (barbed end) thereby blocking the exchange of subunits at these ends. Unlike other capping proteins (such as gelsolin and severin), these proteins do not sever actin filaments. May play a role in the morphogenesis of spermatid. This is F-actin-capping protein subunit alpha-3 (CAPZA3) from Macaca fascicularis (Crab-eating macaque).